We begin with the raw amino-acid sequence, 96 residues long: Prokineticin Bm8-f (96 aa).

The first 19 residues, 1 to 19 (MKCFAQIVVLLLVIAFSHG), serve as a signal peptide directing secretion. Cystine bridges form between Cys-26-Cys-38, Cys-32-Cys-50, Cys-37-Cys-78, Cys-60-Cys-86, and Cys-80-Cys-95.

This sequence belongs to the AVIT (prokineticin) family. In terms of tissue distribution, expressed by the skin glands.

It localises to the secreted. Functionally, potent agonist for both PKR1/PROKR1 and PKR2/PROKR2, and inducer of a potent and long-lasting hyperalgesia. Also potentiates capsaicin-induced TRPV1 current, when tested on DRG neurons. At subnanomolar concentrations, this protein both induces potent chemotaxis of macrophages and stimulates LPS-induced production of the pro-inflammatory cytokines IL-1 and IL-12. In vivo, potently stimulates the contraction of the guinea-pig gastrointestinal (GI) smooth muscle (nanomolar concentration). This is Prokineticin Bm8-f from Bombina maxima (Giant fire-bellied toad).